The sequence spans 153 residues: uncharacterized protein (153 aa).

This is an uncharacterized protein from Ureaplasma parvum serovar 3 (strain ATCC 700970).